A 119-amino-acid chain; its full sequence is UPF0231 protein ECA3777 (119 aa).

This sequence belongs to the UPF0231 family.

In Pectobacterium atrosepticum (strain SCRI 1043 / ATCC BAA-672) (Erwinia carotovora subsp. atroseptica), this protein is UPF0231 protein ECA3777.